A 276-amino-acid chain; its full sequence is NAD kinase (276 aa).

Aspartate 66 (proton acceptor) is an active-site residue. Residues 66 to 67 (DG), 139 to 140 (ND), aspartate 168, 179 to 184 (TAYNIS), and glutamine 234 contribute to the NAD(+) site.

Belongs to the NAD kinase family. It depends on a divalent metal cation as a cofactor.

The protein resides in the cytoplasm. It catalyses the reaction NAD(+) + ATP = ADP + NADP(+) + H(+). Its function is as follows. Involved in the regulation of the intracellular balance of NAD and NADP, and is a key enzyme in the biosynthesis of NADP. Catalyzes specifically the phosphorylation on 2'-hydroxyl of the adenosine moiety of NAD to yield NADP. The polypeptide is NAD kinase (Campylobacter lari (strain RM2100 / D67 / ATCC BAA-1060)).